We begin with the raw amino-acid sequence, 217 residues long: UPF0502 protein VIBHAR_05349 (217 aa).

This sequence belongs to the UPF0502 family.

This chain is UPF0502 protein VIBHAR_05349, found in Vibrio campbellii (strain ATCC BAA-1116).